A 211-amino-acid chain; its full sequence is HTH-type transcriptional repressor FabR (211 aa).

The region spanning 10-70 (RTRRSLIEAA…TMVDESGLML (61 aa)) is the HTH tetR-type domain. The segment at residues 33 to 52 (SLREVSREAGIAPTSFYRHF) is a DNA-binding region (H-T-H motif).

As to quaternary structure, homodimer.

The protein resides in the cytoplasm. Represses the transcription of fabB, involved in unsaturated fatty acid (UFA) biosynthesis. By controlling UFA production, FabR directly influences the physical properties of the membrane bilayer. The protein is HTH-type transcriptional repressor FabR of Yersinia pseudotuberculosis serotype O:1b (strain IP 31758).